A 336-amino-acid chain; its full sequence is tRNA N6-adenosine threonylcarbamoyltransferase (336 aa).

Residues His-114 and His-118 each contribute to the Fe cation site. Residues 136–140, Asp-169, Gly-182, Asp-186, and Asn-275 each bind substrate; that span reads LVSGG. Residue Asp-301 participates in Fe cation binding.

It belongs to the KAE1 / TsaD family. It depends on Fe(2+) as a cofactor.

It is found in the cytoplasm. The enzyme catalyses L-threonylcarbamoyladenylate + adenosine(37) in tRNA = N(6)-L-threonylcarbamoyladenosine(37) in tRNA + AMP + H(+). Required for the formation of a threonylcarbamoyl group on adenosine at position 37 (t(6)A37) in tRNAs that read codons beginning with adenine. Is involved in the transfer of the threonylcarbamoyl moiety of threonylcarbamoyl-AMP (TC-AMP) to the N6 group of A37, together with TsaE and TsaB. TsaD likely plays a direct catalytic role in this reaction. The sequence is that of tRNA N6-adenosine threonylcarbamoyltransferase from Streptococcus pneumoniae (strain Taiwan19F-14).